Here is a 583-residue protein sequence, read N- to C-terminus: MPGRTWELCLLLLLGLGLGSQEALPPPCESEIYCHGELLNQVQMAKLYQDDKQFVDMPLSIAPEQVLQTFTELSRDHNHSIPREQLQAFVHEHFQAKGQELQPWTPADWKDSPQFLQKISDAKLRAWAGQLHQLWKKLGKKMKPEVLSHPERFSLIYSEHPFIVPGGRFVEFYYWDSYWVMEGLLLSEMAETVKGMLQNFLDLVKTYGHVPNGGRVYYLQRSQPPLLTLMMDCYLTHTNDTAFLQENIETLALELDFWTKNRTVSVSLEGKNYLLNRYYVPYGGPRPESYSKDVELADTLPEGDREALWAELKAGAESGWDFSSRWLIGGPNPNSLSGIRTSKLVPVDLNAFLCQAEELMSNFYSRLGNDSQATKYRILRSQRLAALNTVLWDEQTGAWFDYDLEKKKKNREFYPSNLTPLWAGCFSDPGVADKALKYLEDNRILTYQYGIPTSLQKTGQQWDFPNAWAPLQDLVIRGLAKAPLRRAQEVAFQLAQNWIRTNFDVYSQKSAMYEKYDVSNGGQPGGGGEYEVQEGFGWTNGVVLMLLDRYGDRLTSGAKLAFLEPHCLAATLLPSLLLSLLPW.

A signal peptide spans 1 to 23 (MPGRTWELCLLLLLGLGLGSQEA). Residue Asn78 is glycosylated (N-linked (GlcNAc...) asparagine). Residues Arg168, 175-176 (WD), Asn212, and 221-223 (RSQ) each bind substrate. N-linked (GlcNAc...) asparagine glycans are attached at residues Asn239 and Asn261. Residues 286–288 (RPE) and Gly319 contribute to the substrate site. The Proton donor/acceptor role is filled by Asp321. N-linked (GlcNAc...) asparagine glycosylation is present at Asn369. The active-site Proton donor/acceptor is Glu514. Glu529 is a binding site for substrate. A lipid anchor (GPI-anchor amidated serine) is attached at Ser556. Positions 557–583 (GAKLAFLEPHCLAATLLPSLLLSLLPW) are cleaved as a propeptide — removed in mature form.

The protein belongs to the glycosyl hydrolase 37 family. As to quaternary structure, homodimer; disulfide-linked. As to expression, expressed in kidney, liver and small intestine. Also more weakly expressed in pancreas.

The protein localises to the cell membrane. It carries out the reaction alpha,alpha-trehalose + H2O = alpha-D-glucose + beta-D-glucose. In terms of biological role, intestinal trehalase is probably involved in the hydrolysis of ingested trehalose. This Homo sapiens (Human) protein is Trehalase.